Here is a 311-residue protein sequence, read N- to C-terminus: p-hydroxybenzoic acid efflux pump subunit AaeA (311 aa).

The chain crosses the membrane as a helical span at residues 11 to 31 (VGITVLVVVLAVIAIFNVWAF).

This sequence belongs to the membrane fusion protein (MFP) (TC 8.A.1) family.

It is found in the cell inner membrane. Its function is as follows. Forms an efflux pump with AaeB. This Yersinia pseudotuberculosis serotype O:3 (strain YPIII) protein is p-hydroxybenzoic acid efflux pump subunit AaeA.